The chain runs to 227 residues: Pro-thyrotropin-releasing hormone-A (227 aa).

The signal sequence occupies residues 1–15; the sequence is MVSVWWLLLLGTTVS. Glutamine 75 bears the Pyrrolidone carboxylic acid mark. Proline 77 is modified (proline amide). The residue at position 89 (glutamine 89) is a Pyrrolidone carboxylic acid. At proline 91 the chain carries Proline amide. Glutamine 107 bears the Pyrrolidone carboxylic acid mark. 2 disordered regions span residues 107–128 and 151–204; these read QHPG…KREE and RRQH…PCEG. Proline amide is present on proline 109. Residues 112-128 show a composition bias toward basic and acidic residues; sequence RFVDDVEKRQHPGKREE. A Pyrrolidone carboxylic acid modification is found at glutamine 121. A Proline amide modification is found at proline 123. Glutamine 153 is subject to Pyrrolidone carboxylic acid. Proline 155 is modified (proline amide). Glutamine 168 carries the pyrrolidone carboxylic acid modification. A Proline amide modification is found at proline 170. Positions 184 to 201 are enriched in basic and acidic residues; sequence ENSKEVGKRQHPGKRYDP. Residue glutamine 193 is modified to Pyrrolidone carboxylic acid. Proline 195 bears the Proline amide mark.

It belongs to the TRH family.

The protein localises to the secreted. The chain is Pro-thyrotropin-releasing hormone-A (trh-a) from Xenopus laevis (African clawed frog).